Here is a 504-residue protein sequence, read N- to C-terminus: Ribosomal protein uS12 methylthiotransferase RimO (504 aa).

The region spanning 19 to 135 (KKVGFVSLGC…ILAASGIEPR (117 aa)) is the MTTase N-terminal domain. Residues C28, C64, C98, C214, C218, and C221 each coordinate [4Fe-4S] cluster. A Radical SAM core domain is found at 200–430 (ATPKYMAYIK…MSLQKQISKK (231 aa)). Residues 433-504 (KALIGREFDV…HDYDLVARLL (72 aa)) enclose the TRAM domain.

The protein belongs to the methylthiotransferase family. RimO subfamily. [4Fe-4S] cluster serves as cofactor.

The protein resides in the cytoplasm. The catalysed reaction is L-aspartate(89)-[ribosomal protein uS12]-hydrogen + (sulfur carrier)-SH + AH2 + 2 S-adenosyl-L-methionine = 3-methylsulfanyl-L-aspartate(89)-[ribosomal protein uS12]-hydrogen + (sulfur carrier)-H + 5'-deoxyadenosine + L-methionine + A + S-adenosyl-L-homocysteine + 2 H(+). Functionally, catalyzes the methylthiolation of an aspartic acid residue of ribosomal protein uS12. This Koribacter versatilis (strain Ellin345) protein is Ribosomal protein uS12 methylthiotransferase RimO.